A 374-amino-acid chain; its full sequence is S-adenosylmethionine synthase 2 (374 aa).

Position 11 (glutamate 11) interacts with Mg(2+). ATP is bound at residue histidine 17. Glutamate 45 is a K(+) binding site. L-methionine contacts are provided by glutamate 58 and glutamine 101. ATP-binding positions include 169–171, 237–240, aspartate 248, 254–255, alanine 271, lysine 275, and lysine 279; these read DGK, SGRF, and RK. Aspartate 248 serves as a coordination point for L-methionine. Residue lysine 279 participates in L-methionine binding.

This sequence belongs to the AdoMet synthase family. In terms of assembly, homotetramer. It depends on Mn(2+) as a cofactor. Mg(2+) serves as cofactor. Co(2+) is required as a cofactor. The cofactor is K(+). In terms of tissue distribution, expressed in vegetative and reproductive tissues.

It is found in the cytoplasm. The enzyme catalyses L-methionine + ATP + H2O = S-adenosyl-L-methionine + phosphate + diphosphate. It participates in amino-acid biosynthesis; S-adenosyl-L-methionine biosynthesis; S-adenosyl-L-methionine from L-methionine: step 1/1. Its function is as follows. Catalyzes the formation of S-adenosylmethionine from methionine and ATP. The reaction comprises two steps that are both catalyzed by the same enzyme: formation of S-adenosylmethionine (AdoMet) and triphosphate, and subsequent hydrolysis of the triphosphate. The chain is S-adenosylmethionine synthase 2 (SAMS2) from Pisum sativum (Garden pea).